Consider the following 328-residue polypeptide: MTTNFSILASAKALPTTKVTNQELTQLMATSDDWIKQRTGIRSRHVATDETTTSLAVSVAQQLLQQSRLAATAIDLIIVATMSPDYLTPATAPQVQAAIGAEKAIAFDINVACAGFVYGMQLVHQYLQPGQTALLIGSETLSRLVDWHDRSTAVLFGDGAGGLLITAKPNTTTGHWLGGHYATFGADGHYLTAGQQPQVNPWSTRTDGADSNRWAFQMNGRRVYDFATKQVPHSIEQALMQARLESSDIKAFVLHQANARIVKSVGQKLNLATEQLPMNIAQYGNTAAASEPILFAEMVAQKQVQRGDKLVFTGFGGGLSVGSAVIEY.

Catalysis depends on residues Cys-113 and His-255. Positions 256–260 (QANAR) are ACP-binding. The active site involves Asn-285.

It belongs to the thiolase-like superfamily. FabH family. In terms of assembly, homodimer.

The protein resides in the cytoplasm. It catalyses the reaction malonyl-[ACP] + acetyl-CoA + H(+) = 3-oxobutanoyl-[ACP] + CO2 + CoA. The protein operates within lipid metabolism; fatty acid biosynthesis. In terms of biological role, catalyzes the condensation reaction of fatty acid synthesis by the addition to an acyl acceptor of two carbons from malonyl-ACP. Catalyzes the first condensation reaction which initiates fatty acid synthesis and may therefore play a role in governing the total rate of fatty acid production. Possesses both acetoacetyl-ACP synthase and acetyl transacylase activities. Its substrate specificity determines the biosynthesis of branched-chain and/or straight-chain of fatty acids. This Lactiplantibacillus plantarum (strain ATCC BAA-793 / NCIMB 8826 / WCFS1) (Lactobacillus plantarum) protein is Beta-ketoacyl-[acyl-carrier-protein] synthase III 2.